The following is a 126-amino-acid chain: Aspartate 1-decarboxylase (126 aa).

The Schiff-base intermediate with substrate; via pyruvic acid role is filled by Ser25. Ser25 carries the pyruvic acid (Ser) modification. Thr57 serves as a coordination point for substrate. Tyr58 serves as the catalytic Proton donor. 73–75 (GAA) lines the substrate pocket.

It belongs to the PanD family. Heterooctamer of four alpha and four beta subunits. Requires pyruvate as cofactor. Is synthesized initially as an inactive proenzyme, which is activated by self-cleavage at a specific serine bond to produce a beta-subunit with a hydroxyl group at its C-terminus and an alpha-subunit with a pyruvoyl group at its N-terminus.

The protein localises to the cytoplasm. The catalysed reaction is L-aspartate + H(+) = beta-alanine + CO2. It participates in cofactor biosynthesis; (R)-pantothenate biosynthesis; beta-alanine from L-aspartate: step 1/1. Catalyzes the pyruvoyl-dependent decarboxylation of aspartate to produce beta-alanine. The protein is Aspartate 1-decarboxylase of Thioalkalivibrio sulfidiphilus (strain HL-EbGR7).